The sequence spans 479 residues: Deoxyribodipyrimidine photo-lyase (479 aa).

The Photolyase/cryptochrome alpha/beta domain maps to 6-137; the sequence is SLKAVWFRRD…PFYTFEDAYL (132 aa). FAD is bound at residue Tyr-229. Arg-233 contributes to the DNA binding site. FAD contacts are provided by residues 241 to 245 and 278 to 285; these read TSRLS and ELAWRDFY. Interaction with DNA stretches follow at residues 278 to 285 and 344 to 345; these read ELAWRDFY and NR. An FAD-binding site is contributed by 375–377; it reads DYD. Residue Gln-407 participates in DNA binding.

It belongs to the DNA photolyase class-1 family. Monomer. FAD is required as a cofactor. Requires (6R)-5,10-methylene-5,6,7,8-tetrahydrofolate as cofactor.

It catalyses the reaction cyclobutadipyrimidine (in DNA) = 2 pyrimidine residues (in DNA).. Its function is as follows. Involved in repair of UV radiation-induced DNA damage. Catalyzes the light-dependent monomerization (300-600 nm) of cyclobutyl pyrimidine dimers (in cis-syn configuration), which are formed between adjacent bases on the same DNA strand upon exposure to ultraviolet radiation. The chain is Deoxyribodipyrimidine photo-lyase (phr) from Alkalihalophilus pseudofirmus (strain ATCC BAA-2126 / JCM 17055 / OF4) (Bacillus pseudofirmus).